Consider the following 104-residue polypeptide: uncharacterized protein (104 aa).

This is an uncharacterized protein from Bacillus subtilis (strain 168).